Reading from the N-terminus, the 365-residue chain is Alanine racemase (365 aa).

Lysine 35 acts as the Proton acceptor; specific for D-alanine in catalysis. Lysine 35 carries the N6-(pyridoxal phosphate)lysine modification. Arginine 130 contacts substrate. Tyrosine 256 (proton acceptor; specific for L-alanine) is an active-site residue. Position 304 (methionine 304) interacts with substrate.

The protein belongs to the alanine racemase family. Requires pyridoxal 5'-phosphate as cofactor.

It catalyses the reaction L-alanine = D-alanine. It participates in amino-acid biosynthesis; D-alanine biosynthesis; D-alanine from L-alanine: step 1/1. Functionally, catalyzes the interconversion of L-alanine and D-alanine. May also act on other amino acids. The sequence is that of Alanine racemase (alr) from Acidovorax sp. (strain JS42).